We begin with the raw amino-acid sequence, 122 residues long: Large ribosomal subunit protein uL14 (122 aa).

The protein belongs to the universal ribosomal protein uL14 family. As to quaternary structure, part of the 50S ribosomal subunit. Forms a cluster with proteins L3 and L19. In the 70S ribosome, L14 and L19 interact and together make contacts with the 16S rRNA in bridges B5 and B8.

Binds to 23S rRNA. Forms part of two intersubunit bridges in the 70S ribosome. The protein is Large ribosomal subunit protein uL14 of Helicobacter pylori (strain J99 / ATCC 700824) (Campylobacter pylori J99).